The sequence spans 237 residues: DNA repair protein RecO (237 aa).

The protein belongs to the RecO family.

In terms of biological role, involved in DNA repair and RecF pathway recombination. The polypeptide is DNA repair protein RecO (Rickettsia africae (strain ESF-5)).